The primary structure comprises 369 residues: Anhydro-N-acetylmuramic acid kinase (369 aa).

ATP is bound at residue 12–19 (GTSLDGVD).

Belongs to the anhydro-N-acetylmuramic acid kinase family.

It catalyses the reaction 1,6-anhydro-N-acetyl-beta-muramate + ATP + H2O = N-acetyl-D-muramate 6-phosphate + ADP + H(+). The protein operates within amino-sugar metabolism; 1,6-anhydro-N-acetylmuramate degradation. It functions in the pathway cell wall biogenesis; peptidoglycan recycling. Catalyzes the specific phosphorylation of 1,6-anhydro-N-acetylmuramic acid (anhMurNAc) with the simultaneous cleavage of the 1,6-anhydro ring, generating MurNAc-6-P. Is required for the utilization of anhMurNAc either imported from the medium or derived from its own cell wall murein, and thus plays a role in cell wall recycling. The protein is Anhydro-N-acetylmuramic acid kinase of Escherichia coli (strain K12 / MC4100 / BW2952).